The sequence spans 771 residues: Semaphorin-3A (771 aa).

A signal peptide spans 1 to 20; it reads MGWLTRIVCLFWGVLLTARA. Positions 31–514 constitute a Sema domain; the sequence is RLKLSYKEML…STAGVAQLPL (484 aa). Asn-53 is a glycosylation site (N-linked (GlcNAc...) asparagine). A disulfide bridge links Cys-103 with Cys-114. N-linked (GlcNAc...) asparagine glycosylation is present at Asn-125. Intrachain disulfides connect Cys-132–Cys-141, Cys-269–Cys-381, Cys-293–Cys-341, and Cys-517–Cys-535. One can recognise an Ig-like C2-type domain in the interval 580–664; it reads PEERIIYGVE…GFIQTLLKVT (85 aa). N-linked (GlcNAc...) asparagine glycosylation occurs at Asn-590. Cys-649 and Cys-722 form a disulfide bridge. The segment covering 728-737 has biased composition (basic residues); it reads RDRKQRRQRP. The disordered stretch occupies residues 728 to 771; that stretch reads RDRKQRRQRPGHTPGNSNKWKHLQENKKGRNRRTHEFERAPRSV. Over residues 749–771 the composition is skewed to basic and acidic residues; that stretch reads HLQENKKGRNRRTHEFERAPRSV.

The protein belongs to the semaphorin family. Interacts with PLXND1. In terms of tissue distribution, expressed in the dorsal root ganglia.

It is found in the secreted. Its function is as follows. Involved in the development of the olfactory system and in neuronal control of puberty. Induces the collapse and paralysis of neuronal growth cones. Could serve as a ligand that guides specific growth cones by a motility-inhibiting mechanism. Binds to the complex neuropilin-1/plexin-1. The polypeptide is Semaphorin-3A (SEMA3A) (Homo sapiens (Human)).